A 252-amino-acid polypeptide reads, in one-letter code: Imidazole glycerol phosphate synthase subunit HisF (252 aa).

Residues Asp-11 and Asp-130 contribute to the active site.

Belongs to the HisA/HisF family. In terms of assembly, heterodimer of HisH and HisF.

The protein resides in the cytoplasm. The enzyme catalyses 5-[(5-phospho-1-deoxy-D-ribulos-1-ylimino)methylamino]-1-(5-phospho-beta-D-ribosyl)imidazole-4-carboxamide + L-glutamine = D-erythro-1-(imidazol-4-yl)glycerol 3-phosphate + 5-amino-1-(5-phospho-beta-D-ribosyl)imidazole-4-carboxamide + L-glutamate + H(+). Its pathway is amino-acid biosynthesis; L-histidine biosynthesis; L-histidine from 5-phospho-alpha-D-ribose 1-diphosphate: step 5/9. Functionally, IGPS catalyzes the conversion of PRFAR and glutamine to IGP, AICAR and glutamate. The HisF subunit catalyzes the cyclization activity that produces IGP and AICAR from PRFAR using the ammonia provided by the HisH subunit. This chain is Imidazole glycerol phosphate synthase subunit HisF, found in Staphylococcus aureus (strain MRSA252).